The primary structure comprises 434 residues: MGIKNLKSLLLENKSLTILDDNLYKVYNGIFVDTMSIYIAVANCVRNLEELTTVFIKYVNGWVKKGGHVTLFIDRGSIKIKQDVRDKRRKYSKLTKDRKMLELEKCTSEIQNVTGFMEEEIKAEMQLKIDKLTFQIYLSDSDNIKISLNEILTHFNNNENVTLFYCDERDAEFVMCLEAKTHFSTTGEWPLIISTDQDTMLFASADNHPKMIKNLTQLFKYVPSAEDNYLAKLTALVNGCDFFPGLYGASITPNNLNKIQLFSDFTIDNIVTSLAIKNYYRKTNSTVDVRNIVTFINDYANLDDVYSYIPPCQCTVQEFIFSALDEKWNEFKSSYLESVPLPCQLMYALEPRKEIDVSEVKTLSSYIDFENTKSDIDVIKSISSIFGYSNENCNTIVFGIYKDNLLLSINSSFYFNDSLLITNTKSDNIINIGY.

The Mg(2+) site is built by Asp-33, Asp-74, Glu-168, Asp-170, Asp-196, and Asp-198.

Belongs to the XPG/RAD2 endonuclease family. FEN1 subfamily. Mg(2+) is required as a cofactor.

It localises to the virion. Its function is as follows. Putative nuclease that seems to be required for double-strand break repair, homologous recombination, and production of full-length viral genomic DNA. This is Putative nuclease OPG089 (OPG089) from Vaccinia virus (strain Western Reserve) (VACV).